Consider the following 134-residue polypeptide: Antifungal protein ginkbilobin-2 (134 aa).

Residues 1-26 (MKTMRMNSAFILAFALAAAMLILTEA) form the signal peptide. One can recognise a Gnk2-homologous domain in the interval 29-134 (TAFVSSACNT…CFIQYEQRSF (106 aa)). 3 cysteine pairs are disulfide-bonded: Cys-36–Cys-112, Cys-88–Cys-97, and Cys-100–Cys-125. Residue Asn-37 coordinates alpha-D-mannopyranose. Alpha-D-mannopyranose contacts are provided by Arg-119 and Glu-130.

In terms of assembly, binds actin in vitro.

Its subcellular location is the secreted. Its function is as follows. Possesses antifungal activity against F.oxysporum, T.reesei and C.albicans. Weakly inhibits the aspartic acid protease pepsin activity. Exerts antifungal activity against S.cerevisiae and F.culmorum through its carbohydrate-binding specificity. Acts as a lectin that stricly recognizes alpha-1,2-linked mannose moieties and interacts with the yeast cell wall mannan polysaccharide. Can interfere with the fungal actin remodeling resulting to the activation of an actin-dependent cell death. The sequence is that of Antifungal protein ginkbilobin-2 from Ginkgo biloba (Ginkgo).